The sequence spans 792 residues: Ribonucleoside-diphosphate reductase large subunit (792 aa).

The ATP-cone domain occupies 1-92; the sequence is MHVIKRDGRQ…VSNLHKETKK (92 aa). Residues 5–6, 11–17, Thr-53, and Asp-57 contribute to the ATP site; these read KR and ERVMFDK. Position 17 is an N6-acetyllysine (Lys-17). Ser-202 and Ser-217 together coordinate GDP. Cys-218 and Cys-444 form a disulfide bridge. DTTP-binding positions include 226–228, Lys-243, Arg-256, and 263–264; these read DSI and AG. Lys-376 is subject to N6-acetyllysine. Asn-427 serves as a coordination point for GDP. The active-site Proton acceptor is Asn-427. Cys-429 functions as the Cysteine radical intermediate in the catalytic mechanism. GDP-binding positions include Glu-431 and 604-607; that span reads TAST. Glu-431 functions as the Proton acceptor in the catalytic mechanism. Phosphothreonine is present on Thr-751.

Belongs to the ribonucleoside diphosphate reductase large chain family. As to quaternary structure, heterodimer of a large and a small subunit. Heterodimer with small subunit RRM2 or RRM2B. The heterodimer with RRM2 has higher catalytic activity than the heterodimer with RRM2B. Interacts with AHCYL1 which inhibits its activity.

It localises to the cytoplasm. It carries out the reaction a 2'-deoxyribonucleoside 5'-diphosphate + [thioredoxin]-disulfide + H2O = a ribonucleoside 5'-diphosphate + [thioredoxin]-dithiol. With respect to regulation, under complex allosteric control mediated by deoxynucleoside triphosphates and ATP binding to separate specificity and activation sites on the M1 subunit. The type of nucleotide bound at the specificity site determines substrate preference. It seems probable that ATP makes the enzyme reduce CDP and UDP, dGTP favors ADP reduction and dTTP favors GDP reduction. Stimulated by ATP and inhibited by dATP binding to the activity site, the dATP inhibition is mediated by AHCYL1 which stabilizes dATP in the site. In terms of biological role, provides the precursors necessary for DNA synthesis. Catalyzes the biosynthesis of deoxyribonucleotides from the corresponding ribonucleotides. This is Ribonucleoside-diphosphate reductase large subunit (RRM1) from Homo sapiens (Human).